We begin with the raw amino-acid sequence, 513 residues long: t-SNARE domain-containing protein 1 (513 aa).

Disordered regions lie at residues 1–23 (MSYG…GPSR) and 49–128 (ESKL…KPNF). Gly residues predominate over residues 7-19 (ARGGGLGSRGPFG). At Ser378 the chain carries Phosphoserine. The 63-residue stretch at 416-478 (LEAIRLREEA…EAARQLLAGA (63 aa)) folds into the t-SNARE coiled-coil homology domain. The helical transmembrane segment at 491-511 (CFLSAGVTALLVIIIIIATSV) threads the bilayer.

The protein localises to the membrane. The chain is t-SNARE domain-containing protein 1 (TSNARE1) from Homo sapiens (Human).